The sequence spans 78 residues: Large ribosomal subunit protein bL28 (78 aa).

Residues 1-25 (MSRVCQVTGKRPTVGNNRSHAKNAT) are disordered.

Belongs to the bacterial ribosomal protein bL28 family.

In Tolumonas auensis (strain DSM 9187 / NBRC 110442 / TA 4), this protein is Large ribosomal subunit protein bL28.